Consider the following 994-residue polypeptide: Myosin IA heavy chain (994 aa).

Positions 12–720 (VGVEDLIMLT…PLFLLEDKRN (709 aa)) constitute a Myosin motor domain. 105–112 (GESGAGKT) contributes to the ATP binding site. Positions 574–654 (TFIPTDKKRP…RAGYCYRQTF (81 aa)) are actin-binding. IQ domains are found at residues 723–744 (LNDLATKIGSVWKMYKQRKWYL) and 745–774 (RTLAAIKIQRTYRGWLLVRECVKLKNQSIS). The region spanning 782-970 (RNRQSIKLSK…ANSPSFTAKA (189 aa)) is the TH1 domain.

This sequence belongs to the TRAFAC class myosin-kinesin ATPase superfamily. Myosin family. Myosin I heavy chain is single-headed. Dimer of a heavy and a light chain. Inability to self-assemble into filaments.

In terms of biological role, actin-based motor protein, possibly involved in a wide range of motile processes, such as cell movement across a surface, and extension and retraction of pseudopodia or lamellipodia. The sequence is that of Myosin IA heavy chain (myoA) from Dictyostelium discoideum (Social amoeba).